The sequence spans 228 residues: Octanoyltransferase (228 aa).

Residues 32 to 214 form the BPL/LPL catalytic domain; sequence DVVPDTVLLV…HLRRLFERDW (183 aa). Substrate is bound by residues 77–84, 144–146, and 157–159; these read RGGDVTYH, SVG, and GIA. The Acyl-thioester intermediate role is filled by C175.

This sequence belongs to the LipB family.

The protein localises to the cytoplasm. The catalysed reaction is octanoyl-[ACP] + L-lysyl-[protein] = N(6)-octanoyl-L-lysyl-[protein] + holo-[ACP] + H(+). The protein operates within protein modification; protein lipoylation via endogenous pathway; protein N(6)-(lipoyl)lysine from octanoyl-[acyl-carrier-protein]: step 1/2. Its function is as follows. Catalyzes the transfer of endogenously produced octanoic acid from octanoyl-acyl-carrier-protein onto the lipoyl domains of lipoate-dependent enzymes. Lipoyl-ACP can also act as a substrate although octanoyl-ACP is likely to be the physiological substrate. This chain is Octanoyltransferase, found in Syntrophobacter fumaroxidans (strain DSM 10017 / MPOB).